A 295-amino-acid chain; its full sequence is 4-diphosphocytidyl-2-C-methyl-D-erythritol kinase (295 aa).

Lys15 is a catalytic residue. 101–111 (PIAAGLGGGSS) is a binding site for ATP. Asp143 is a catalytic residue.

This sequence belongs to the GHMP kinase family. IspE subfamily.

It catalyses the reaction 4-CDP-2-C-methyl-D-erythritol + ATP = 4-CDP-2-C-methyl-D-erythritol 2-phosphate + ADP + H(+). It functions in the pathway isoprenoid biosynthesis; isopentenyl diphosphate biosynthesis via DXP pathway; isopentenyl diphosphate from 1-deoxy-D-xylulose 5-phosphate: step 3/6. Functionally, catalyzes the phosphorylation of the position 2 hydroxy group of 4-diphosphocytidyl-2C-methyl-D-erythritol. The polypeptide is 4-diphosphocytidyl-2-C-methyl-D-erythritol kinase (Caulobacter vibrioides (strain ATCC 19089 / CIP 103742 / CB 15) (Caulobacter crescentus)).